A 266-amino-acid polypeptide reads, in one-letter code: Putative carbamate hydrolase RutD (266 aa).

It belongs to the AB hydrolase superfamily. Hydrolase RutD family.

It catalyses the reaction carbamate + 2 H(+) = NH4(+) + CO2. Functionally, involved in pyrimidine catabolism. May facilitate the hydrolysis of carbamate, a reaction that can also occur spontaneously. The polypeptide is Putative carbamate hydrolase RutD (Escherichia coli O111:H- (strain 11128 / EHEC)).